The primary structure comprises 191 residues: Fe/S biogenesis protein NfuA (191 aa).

[4Fe-4S] cluster contacts are provided by Cys-149 and Cys-152.

Belongs to the NfuA family. As to quaternary structure, homodimer. [4Fe-4S] cluster serves as cofactor.

Its function is as follows. Involved in iron-sulfur cluster biogenesis. Binds a 4Fe-4S cluster, can transfer this cluster to apoproteins, and thereby intervenes in the maturation of Fe/S proteins. Could also act as a scaffold/chaperone for damaged Fe/S proteins. The polypeptide is Fe/S biogenesis protein NfuA (Serratia proteamaculans (strain 568)).